The following is a 271-amino-acid chain: NADH-quinone oxidoreductase subunit B (271 aa).

The [4Fe-4S] cluster site is built by cysteine 37, cysteine 38, cysteine 103, and cysteine 132. Residues 227-271 (LAPPSVFGRAKRIPVDPKPSDEARAHGPGPTTESIGDVDGPDRGI) are disordered. Residues 239-251 (IPVDPKPSDEARA) show a composition bias toward basic and acidic residues.

Belongs to the complex I 20 kDa subunit family. NDH-1 is composed of 14 different subunits. Subunits NuoB, C, D, E, F, and G constitute the peripheral sector of the complex. [4Fe-4S] cluster serves as cofactor.

It localises to the cell membrane. It carries out the reaction a quinone + NADH + 5 H(+)(in) = a quinol + NAD(+) + 4 H(+)(out). In terms of biological role, NDH-1 shuttles electrons from NADH, via FMN and iron-sulfur (Fe-S) centers, to quinones in the respiratory chain. The immediate electron acceptor for the enzyme in this species is believed to be a menaquinone. Couples the redox reaction to proton translocation (for every two electrons transferred, four hydrogen ions are translocated across the cytoplasmic membrane), and thus conserves the redox energy in a proton gradient. This is NADH-quinone oxidoreductase subunit B from Frankia casuarinae (strain DSM 45818 / CECT 9043 / HFP020203 / CcI3).